A 212-amino-acid polypeptide reads, in one-letter code: Large ribosomal subunit protein bL25 (212 aa).

The disordered stretch occupies residues 190–212; sequence IAEAGDALAEPEVISKGSGEADE.

Belongs to the bacterial ribosomal protein bL25 family. CTC subfamily. Part of the 50S ribosomal subunit; part of the 5S rRNA/L5/L18/L25 subcomplex. Contacts the 5S rRNA. Binds to the 5S rRNA independently of L5 and L18.

This is one of the proteins that binds to the 5S RNA in the ribosome where it forms part of the central protuberance. This chain is Large ribosomal subunit protein bL25, found in Rhodopirellula baltica (strain DSM 10527 / NCIMB 13988 / SH1).